A 245-amino-acid polypeptide reads, in one-letter code: MAMGATVRAAAADAVVTFLWVLCASALGASTAAVTSYLGVQEGAGHYALLVTTSLLSVLLFTFDLLCGALGGASFNPTDFAASYAAGLDSPSLFSVALRFPAQAAGAVGGALAISELMPAQYKHTLAGPSLKVDPHTGALAEGVLTFVITLTVLWVIVKGPRNVILKTLLLSTSIVSVILAGAEYTGPSMNPANAFGWAYVNNWHNTWEQLYVYWICPFIGAMLAGWIFRVVFLPPAPKPKTKKA.

Helical transmembrane passes span 14-34 (AVVT…TAAV) and 55-75 (LLSV…GASF). Positions 76 to 78 (NPT) match the NPA 1 motif. 3 helical membrane-spanning segments follow: residues 100-120 (FPAQ…LMPA), 138-158 (GALA…WVIV), and 164-184 (VILK…AGAE). The NPA 2 motif lies at 191–193 (NPA). A helical transmembrane segment spans residues 213–233 (VYWICPFIGAMLAGWIFRVVF).

This sequence belongs to the MIP/aquaporin (TC 1.A.8) family. SIP (TC 1.A.8.10) subfamily.

The protein localises to the membrane. Aquaporins facilitate the transport of water and small neutral solutes across cell membranes. This is Aquaporin SIP1-1 (SIP1-1) from Zea mays (Maize).